The primary structure comprises 404 residues: Cysteine desulfurase IscS (404 aa).

Residues 75-76 (AT), asparagine 155, glutamine 183, and 203-205 (SAH) contribute to the pyridoxal 5'-phosphate site. N6-(pyridoxal phosphate)lysine is present on lysine 206. Position 243 (threonine 243) interacts with pyridoxal 5'-phosphate. Residue cysteine 328 is the Cysteine persulfide intermediate of the active site. Cysteine 328 serves as a coordination point for [2Fe-2S] cluster.

It belongs to the class-V pyridoxal-phosphate-dependent aminotransferase family. NifS/IscS subfamily. As to quaternary structure, homodimer. Forms a heterotetramer with IscU, probably interacts with other sulfur acceptors. Requires pyridoxal 5'-phosphate as cofactor.

Its subcellular location is the cytoplasm. The enzyme catalyses (sulfur carrier)-H + L-cysteine = (sulfur carrier)-SH + L-alanine. The protein operates within cofactor biosynthesis; iron-sulfur cluster biosynthesis. With respect to regulation, inhibited by equimolar N-iodoacetyl-N'-(5-sulfo-1-naphthyl)ethylenediamine. Functionally, master enzyme that delivers sulfur to a number of partners involved in Fe-S cluster assembly, tRNA modification or cofactor biosynthesis. Catalyzes the removal of elemental sulfur from cysteine to produce alanine via an enzyme-bound persulfide intermediate. Functions as a sulfur delivery protein for Fe-S cluster synthesis. Cluster assembly on IscU homodimers proceeds sequentially from 1 2Fe-2S per dimer, to 2 2Fe-2S per dimer and finally 1 4Fe-4S per dimer. This chain is Cysteine desulfurase IscS, found in Azotobacter vinelandii.